The sequence spans 929 residues: Isoleucine--tRNA ligase (929 aa).

The 'HIGH' region signature appears at 58–68; sequence PYANGDIHIGH. Glu-568 serves as a coordination point for L-isoleucyl-5'-AMP. The 'KMSKS' region motif lies at 609–613; the sequence is KMSKS. Position 612 (Lys-612) interacts with ATP. Residues Cys-892, Cys-895, Cys-912, and Cys-915 each coordinate Zn(2+).

It belongs to the class-I aminoacyl-tRNA synthetase family. IleS type 1 subfamily. In terms of assembly, monomer. Requires Zn(2+) as cofactor.

The protein localises to the cytoplasm. It carries out the reaction tRNA(Ile) + L-isoleucine + ATP = L-isoleucyl-tRNA(Ile) + AMP + diphosphate. Functionally, catalyzes the attachment of isoleucine to tRNA(Ile). As IleRS can inadvertently accommodate and process structurally similar amino acids such as valine, to avoid such errors it has two additional distinct tRNA(Ile)-dependent editing activities. One activity is designated as 'pretransfer' editing and involves the hydrolysis of activated Val-AMP. The other activity is designated 'posttransfer' editing and involves deacylation of mischarged Val-tRNA(Ile). This is Isoleucine--tRNA ligase from Thiobacillus denitrificans (strain ATCC 25259 / T1).